Reading from the N-terminus, the 222-residue chain is Ribonuclease T (222 aa).

Residues 20-194 (VVIDVETAGF…YDTERTAELF (175 aa)) form the Exonuclease domain. 4 residues coordinate Mg(2+): Asp-23, Glu-25, His-181, and Asp-186. The active-site Proton donor/acceptor is His-181.

The protein belongs to the RNase T family. As to quaternary structure, homodimer. Mg(2+) is required as a cofactor.

Trims short 3' overhangs of a variety of RNA species, leaving a one or two nucleotide 3' overhang. Responsible for the end-turnover of tRNA: specifically removes the terminal AMP residue from uncharged tRNA (tRNA-C-C-A). Also appears to be involved in tRNA biosynthesis. This Shewanella sp. (strain ANA-3) protein is Ribonuclease T.